The chain runs to 196 residues: ATP-dependent Clp protease proteolytic subunit (196 aa).

Ser96 serves as the catalytic Nucleophile. The active site involves His121.

It belongs to the peptidase S14 family. As to quaternary structure, fourteen ClpP subunits assemble into 2 heptameric rings which stack back to back to give a disk-like structure with a central cavity, resembling the structure of eukaryotic proteasomes.

It localises to the cytoplasm. The catalysed reaction is Hydrolysis of proteins to small peptides in the presence of ATP and magnesium. alpha-casein is the usual test substrate. In the absence of ATP, only oligopeptides shorter than five residues are hydrolyzed (such as succinyl-Leu-Tyr-|-NHMec, and Leu-Tyr-Leu-|-Tyr-Trp, in which cleavage of the -Tyr-|-Leu- and -Tyr-|-Trp bonds also occurs).. Functionally, cleaves peptides in various proteins in a process that requires ATP hydrolysis. Has a chymotrypsin-like activity. Plays a major role in the degradation of misfolded proteins. In Streptococcus pneumoniae (strain 70585), this protein is ATP-dependent Clp protease proteolytic subunit.